The primary structure comprises 428 residues: Serine--tRNA ligase (428 aa).

231–233 lines the L-serine pocket; that stretch reads TAE. ATP is bound by residues 262–264 and V278; that span reads RRE. E285 is an L-serine binding site. 349–352 lines the ATP pocket; that stretch reads EVSS. Position 384 (S384) interacts with L-serine.

The protein belongs to the class-II aminoacyl-tRNA synthetase family. Type-1 seryl-tRNA synthetase subfamily. Homodimer. The tRNA molecule binds across the dimer.

The protein resides in the cytoplasm. The enzyme catalyses tRNA(Ser) + L-serine + ATP = L-seryl-tRNA(Ser) + AMP + diphosphate + H(+). It catalyses the reaction tRNA(Sec) + L-serine + ATP = L-seryl-tRNA(Sec) + AMP + diphosphate + H(+). It participates in aminoacyl-tRNA biosynthesis; selenocysteinyl-tRNA(Sec) biosynthesis; L-seryl-tRNA(Sec) from L-serine and tRNA(Sec): step 1/1. Its function is as follows. Catalyzes the attachment of serine to tRNA(Ser). Is also able to aminoacylate tRNA(Sec) with serine, to form the misacylated tRNA L-seryl-tRNA(Sec), which will be further converted into selenocysteinyl-tRNA(Sec). This is Serine--tRNA ligase from Chlamydia muridarum (strain MoPn / Nigg).